A 677-amino-acid chain; its full sequence is Methionine--tRNA ligase (677 aa).

The short motif at 15-25 is the 'HIGH' region element; sequence PYANGSIHLGH. Zn(2+)-binding residues include Cys-146, Cys-149, Cys-159, and Cys-162. The 'KMSKS' region motif lies at 333 to 337; sequence KMSKS. Lys-336 contacts ATP. The tRNA-binding domain occupies 575 to 677; sequence DFAKVDLRVA…DGAKPGQQVK (103 aa).

This sequence belongs to the class-I aminoacyl-tRNA synthetase family. MetG type 1 subfamily. As to quaternary structure, homodimer. Zn(2+) serves as cofactor.

It localises to the cytoplasm. The catalysed reaction is tRNA(Met) + L-methionine + ATP = L-methionyl-tRNA(Met) + AMP + diphosphate. In terms of biological role, is required not only for elongation of protein synthesis but also for the initiation of all mRNA translation through initiator tRNA(fMet) aminoacylation. The polypeptide is Methionine--tRNA ligase (Citrobacter koseri (strain ATCC BAA-895 / CDC 4225-83 / SGSC4696)).